Consider the following 344-residue polypeptide: Glycerol-3-phosphate dehydrogenase [NAD(P)+] (344 aa).

NADPH contacts are provided by Ser-18, Tyr-19, His-39, and Lys-113. The sn-glycerol 3-phosphate site is built by Lys-113, Gly-142, and Thr-144. NADPH is bound at residue Ala-146. Sn-glycerol 3-phosphate contacts are provided by Lys-198, Asp-251, Ser-261, Arg-262, and Asn-263. The active-site Proton acceptor is the Lys-198. Arg-262 contacts NADPH. Ile-286 and Glu-288 together coordinate NADPH.

Belongs to the NAD-dependent glycerol-3-phosphate dehydrogenase family.

The protein localises to the cytoplasm. It carries out the reaction sn-glycerol 3-phosphate + NAD(+) = dihydroxyacetone phosphate + NADH + H(+). It catalyses the reaction sn-glycerol 3-phosphate + NADP(+) = dihydroxyacetone phosphate + NADPH + H(+). It functions in the pathway membrane lipid metabolism; glycerophospholipid metabolism. In terms of biological role, catalyzes the reduction of the glycolytic intermediate dihydroxyacetone phosphate (DHAP) to sn-glycerol 3-phosphate (G3P), the key precursor for phospholipid synthesis. The chain is Glycerol-3-phosphate dehydrogenase [NAD(P)+] from Blochmanniella pennsylvanica (strain BPEN).